The following is a 544-amino-acid chain: Chaperonin GroEL (544 aa).

ATP contacts are provided by residues 29–32 (TLGP), 86–90 (DGTTT), Gly-413, 476–478 (NAA), and Asp-492.

It belongs to the chaperonin (HSP60) family. In terms of assembly, forms a cylinder of 14 subunits composed of two heptameric rings stacked back-to-back. Interacts with the co-chaperonin GroES.

It is found in the cytoplasm. The catalysed reaction is ATP + H2O + a folded polypeptide = ADP + phosphate + an unfolded polypeptide.. Together with its co-chaperonin GroES, plays an essential role in assisting protein folding. The GroEL-GroES system forms a nano-cage that allows encapsulation of the non-native substrate proteins and provides a physical environment optimized to promote and accelerate protein folding. The protein is Chaperonin GroEL of Bacillus thuringiensis (strain Al Hakam).